Reading from the N-terminus, the 453-residue chain is Charged multivesicular body protein 7 (453 aa).

Residues 1–22 (MWSPEREAEAPAGGDPAGLLPP) are disordered. The segment covering 10 to 22 (APAGGDPAGLLPP) has biased composition (low complexity). Serine 232 carries the post-translational modification Phosphoserine. The stretch at 243-312 (QLMQSEQLLS…DTVQGILDRI (70 aa)) forms a coiled coil. Basic and acidic residues predominate over residues 392-403 (TKEPLDLPDNPR). 2 disordered regions span residues 392–417 (TKEP…PRIS) and 431–453 (SEGG…LKPL). Threonine 408 bears the Phosphothreonine mark. A phosphoserine mark is found at serine 410, serine 417, serine 431, and serine 441.

It belongs to the SNF7 family. As to quaternary structure, interacts with CHMP4B, but not with VPS25. Interacts with LEMD2 (via C-terminus).

The protein localises to the cytoplasm. It is found in the nucleus envelope. In terms of biological role, ESCRT-III-like protein required to recruit the ESCRT-III complex to the nuclear envelope (NE) during late anaphase. Together with SPAST, the ESCRT-III complex promotes NE sealing and mitotic spindle disassembly during late anaphase. Recruited to the reforming NE during anaphase by LEMD2. Plays a role in the endosomal sorting pathway. The sequence is that of Charged multivesicular body protein 7 (CHMP7) from Homo sapiens (Human).